A 509-amino-acid chain; its full sequence is MRTKQVPVLWACFLLWSLYIASSQTVYPGITARITQRALDYGLQVGMKVLEQLAKEIVIPDLNGSESLKFLKIDYVKYNFSNIKINAFSFPNTSLAFVPGVGIRALSNHGTANISTNWSVKAPLFRDSGAANLFLSGIYFTGIVAFTRNDFGYPALELQDCHVQVSHARVSFFGSLSALYNSFAEPMEKPILKNLNEMVQLCPIAISQVEQFNVNISALEVLTKIDNYTVLDCSLISPPEITENHLDFNLKGAFYPLESLVDPPFTPAPFHLPESRDSMLYIGISEYFFKSASFAHYVSGALGTTLSTREISNYFSQNVQGFGSVLSKIAEIYVLSQPFILQMMATGPPMVNLQRNNFSLEFPAAVIMLTQLDNSTIQPIVSMDFVASTSVGLAILGQKLICSLSLNRFRLSLPENSQRDAKVVRFENILSSILHFGVLPLANTKLQQGFPLPNPYNISFINSDIEVLEGYLLVSSDLAYDTSSKPQPNLNSWGDLNLVHRPWREQPTH.

The N-terminal stretch at Met1 to Ser23 is a signal peptide. Asn63, Asn79, Asn92, Asn113, and Asn117 each carry an N-linked (GlcNAc...) asparagine glycan. Cys161 and Cys202 form a disulfide bridge. 5 N-linked (GlcNAc...) asparagine glycosylation sites follow: Asn215, Asn227, Asn357, Asn374, and Asn457.

The protein belongs to the BPI/LBP/Plunc superfamily. BPI/LBP family.

It localises to the secreted. The protein is BPI fold-containing family C protein (Bpifc) of Mus musculus (Mouse).